An 827-amino-acid polypeptide reads, in one-letter code: Multiple RNA-binding domain-containing protein 1 (827 aa).

One can recognise an RRM 1 domain in the interval 5-78 (SRIFVKNLPP…SRISVDIAKP (74 aa)). Disordered regions lie at residues 77 to 116 (KPIADSKPQHKSPSKGSSKDADPKNAPKVLPPNTKVTAAA), 176 to 230 (AGLE…ATDD), and 256 to 299 (AASG…DPES). The span at 179–189 (EDGESDDEYED) shows a compositional bias: acidic residues. Low complexity-rich tracts occupy residues 208–225 (APLAASAEPSESAPPVSL) and 256–270 (AASGSAAVSVPSTSV). Basic and acidic residues predominate over residues 277 to 288 (KPEEHPAEDSRE). 4 consecutive RRM domains span residues 308–384 (SRLF…PAAA), 489–560 (TTIL…KGPK), 599–682 (SSLF…ASHR), and 704–781 (TKLV…FAQA).

This sequence belongs to the RRM MRD1 family.

The protein localises to the nucleus. Its function is as follows. Involved in pre-rRNA processing. In Neurospora crassa (strain ATCC 24698 / 74-OR23-1A / CBS 708.71 / DSM 1257 / FGSC 987), this protein is Multiple RNA-binding domain-containing protein 1 (mrd-1).